The sequence spans 596 residues: Beta-fructofuranosidase, insoluble isoenzyme 6 (596 aa).

The signal sequence occupies residues 1–25 (MALAGLPLSVFAIAVHFCLVFSSSS). Residues 49–52 (WQND), Gln68, and Trp76 contribute to the substrate site. The active site involves Asp52. N-linked (GlcNAc...) asparagine glycosylation occurs at Asn80. Substrate is bound by residues 113-114 (AS), 177-178 (RD), and Glu232. Residue Asn335 is glycosylated (N-linked (GlcNAc...) asparagine). A disulfide bridge links Cys436 with Cys482. The N-linked (GlcNAc...) asparagine glycan is linked to Asn556.

The protein belongs to the glycosyl hydrolase 32 family. As to expression, expressed in roots. Weakly expressed in flowers.

The protein localises to the secreted. Its subcellular location is the extracellular space. The protein resides in the apoplast. It localises to the cell wall. It carries out the reaction Hydrolysis of terminal non-reducing beta-D-fructofuranoside residues in beta-D-fructofuranosides.. The sequence is that of Beta-fructofuranosidase, insoluble isoenzyme 6 (CIN6) from Oryza sativa subsp. japonica (Rice).